Reading from the N-terminus, the 402-residue chain is DNA polymerase IV (402 aa).

The 183-residue stretch at 5 to 187 folds into the UmuC domain; sequence ILLADMNSFY…LPVRELFGVG (183 aa). Positions 9 and 105 each coordinate Mg(2+). Glu-106 is a catalytic residue.

It belongs to the DNA polymerase type-Y family. Monomer. Mg(2+) serves as cofactor.

Its subcellular location is the cytoplasm. The enzyme catalyses DNA(n) + a 2'-deoxyribonucleoside 5'-triphosphate = DNA(n+1) + diphosphate. Its function is as follows. Poorly processive, error-prone DNA polymerase involved in untargeted mutagenesis. Copies undamaged DNA at stalled replication forks, which arise in vivo from mismatched or misaligned primer ends. These misaligned primers can be extended by PolIV. Exhibits no 3'-5' exonuclease (proofreading) activity. May be involved in translesional synthesis, in conjunction with the beta clamp from PolIII. The sequence is that of DNA polymerase IV from Pelotomaculum thermopropionicum (strain DSM 13744 / JCM 10971 / SI).